Consider the following 328-residue polypeptide: D-cysteine desulfhydrase (328 aa).

Lys-51 carries the post-translational modification N6-(pyridoxal phosphate)lysine.

The protein belongs to the ACC deaminase/D-cysteine desulfhydrase family. In terms of assembly, homodimer. Requires pyridoxal 5'-phosphate as cofactor.

The enzyme catalyses D-cysteine + H2O = hydrogen sulfide + pyruvate + NH4(+) + H(+). In terms of biological role, catalyzes the alpha,beta-elimination reaction of D-cysteine and of several D-cysteine derivatives. It could be a defense mechanism against D-cysteine. This is D-cysteine desulfhydrase from Klebsiella pneumoniae (strain 342).